Consider the following 490-residue polypeptide: ATP synthase subunit beta, chloroplastic (490 aa).

ATP is bound at residue 170–177 (GGAGVGKT).

Belongs to the ATPase alpha/beta chains family. As to quaternary structure, F-type ATPases have 2 components, CF(1) - the catalytic core - and CF(0) - the membrane proton channel. CF(1) has five subunits: alpha(3), beta(3), gamma(1), delta(1), epsilon(1). CF(0) has four main subunits: a(1), b(1), b'(1) and c(9-12).

The protein resides in the plastid. It localises to the chloroplast thylakoid membrane. The catalysed reaction is ATP + H2O + 4 H(+)(in) = ADP + phosphate + 5 H(+)(out). Functionally, produces ATP from ADP in the presence of a proton gradient across the membrane. The catalytic sites are hosted primarily by the beta subunits. The protein is ATP synthase subunit beta, chloroplastic of Pinus koraiensis (Korean pine).